A 659-amino-acid polypeptide reads, in one-letter code: UvrABC system protein B (659 aa).

Positions Gln25–Arg182 constitute a Helicase ATP-binding domain. Residue Gly38 to Thr45 participates in ATP binding. The Beta-hairpin motif lies at Tyr91–Ile114. In terms of domain architecture, Helicase C-terminal spans Gln429–Ile582. Positions Glu622 to Asn657 constitute a UVR domain.

It belongs to the UvrB family. Forms a heterotetramer with UvrA during the search for lesions. Interacts with UvrC in an incision complex.

It is found in the cytoplasm. The UvrABC repair system catalyzes the recognition and processing of DNA lesions. A damage recognition complex composed of 2 UvrA and 2 UvrB subunits scans DNA for abnormalities. Upon binding of the UvrA(2)B(2) complex to a putative damaged site, the DNA wraps around one UvrB monomer. DNA wrap is dependent on ATP binding by UvrB and probably causes local melting of the DNA helix, facilitating insertion of UvrB beta-hairpin between the DNA strands. Then UvrB probes one DNA strand for the presence of a lesion. If a lesion is found the UvrA subunits dissociate and the UvrB-DNA preincision complex is formed. This complex is subsequently bound by UvrC and the second UvrB is released. If no lesion is found, the DNA wraps around the other UvrB subunit that will check the other stand for damage. In Clostridium perfringens (strain SM101 / Type A), this protein is UvrABC system protein B.